Reading from the N-terminus, the 7570-residue chain is Dystonin (7570 aa).

2 Calponin-homology (CH) domains span residues 35–138 (KVQK…LHFQ) and 151–255 (MSAK…DAFP). The interval 35–252 (KVQKKTFTKW…VITYVSSLYD (218 aa)) is actin-binding. Leucine 135, lysine 184, serine 236, and serine 237 each carry phosphoserine. 2 Spectrin repeats span residues 602-699 (EINM…RHLD) and 701-802 (LHNF…QHIK). Residues 887-944 (KTSIPIKAICDYRQIEITIYKDDECVLANNSHRAKWKVISPTGNEAMVPSVCFTVPPP) form the SH3 domain. Spectrin repeat units lie at residues 1293-1422 (KYYR…KFAG) and 1440-1540 (KEHV…QESQ). Phosphoserine is present on serine 1382. The Nuclear localization signal; in isoform 6 motif lies at 1383–1389 (PVKRRRM). Phosphoserine is present on glutamate 1565. Plectin repeat units lie at residues 1584–1626 (IRLL…QLKE), 1660–1703 (KVLE…LERQ), 1774–1817 (RLLS…LTYQ), 1818–1855 (VQTGGIIQSNPAKRLTVDEAVQCDLITSSSALLVLEAQ), and 1856–1891 (RGYVGLIWPHSGEIFPTSSSLQQELITNELAYKILN). Serine 2229 carries the post-translational modification Phosphoserine. Disordered stretches follow at residues 2317-2346 (SNTSGEDEKTHPGFQQMPEDKEDESEIEEY), 2383-2441 (LLND…DETA), and 2585-2616 (DYIYDSNDQDDDDDDGIDEEGGGIRDENGKPR). The segment covering 2336–2345 (DKEDESEIEE) has biased composition (acidic residues). Residues 2385-2394 (NDQQNNTGTD) show a composition bias toward low complexity. Acidic residues-rich tracts occupy residues 2395 to 2412 (TDSDDDFYDTPLFEDDDH), 2430 to 2439 (YDTLQEENDE), and 2591 to 2605 (NDQDDDDDDGIDEEG). The residue at position 2919 (serine 2919) is a Phosphoserine. The disordered stretch occupies residues 3190-3221 (EASTVPSDSQMSDSSGVSPMTNSSELKPESRD). Residues 3192 to 3209 (STVPSDSQMSDSSGVSPM) are compositionally biased toward low complexity. Spectrin repeat units follow at residues 3395-3501 (LQHT…KQIM), 3643-3752 (QEYK…KELD), 3926-4040 (EKFD…NNLK), 4047-4153 (QHYE…EKLQ), 4160-4259 (LSVQ…ETLA), 4269-4368 (ELFE…EAVT), 4516-4621 (QKAQ…QKLE), 4628-4732 (TQFQ…DWID), 4742-4842 (QSLL…QHLQ), 4849-4951 (HQFQ…NKLK), 4958-5058 (LKYK…FCLE), 5068-5167 (QEVS…SFLE), 5174-5277 (GHFQ…EQVE), 5284-5388 (EEFY…AQLQ), 5395-5497 (GRFQ…RQLE), 5504-5715 (QQFH…KTLE), 5831-5933 (QQFD…LQLE), 5941-6041 (QFWE…VALD), 6048-6154 (TQFH…AKLL), 6161-6263 (EKFW…DKLE), 6270-6373 (VQYQ…HKLE), 6380-6482 (GQFQ…QQLD), 6489-6591 (KGFH…TKLE), 6598-6700 (MEFH…RSLD), 6707-6810 (KQFH…NKLE), 6817-6918 (GQFT…TRLE), 6925-7027 (EEFH…QRLA), and 7037-7167 (QELL…RKLN). Serine 3968 is subject to Phosphoserine. Serine 4749 is modified (phosphoserine). Lysine 5470 is covalently cross-linked (Glycyl lysine isopeptide (Lys-Gly) (interchain with G-Cter in ubiquitin)). EF-hand domains follow at residues 7197–7232 (HKKSRVMDFFRRIDKDQDGKITRQEFIDGILSSKFP) and 7233–7268 (TSRLEMSAVADIFDRDGDGYIDYYEFVAALHPNKDA). The Ca(2+) site is built by aspartate 7210, aspartate 7212, aspartate 7214, lysine 7216, glutamate 7221, aspartate 7246, aspartate 7248, aspartate 7250, tyrosine 7252, and glutamate 7257. A GAR domain is found at 7273 to 7351 (TDADKIEDEV…EFLVKNDPCR (79 aa)). 3 disordered regions span residues 7358–7379 (KMLRSESNSSITTTQPTIAKGR), 7395–7452 (SQGM…SKLR), and 7481–7570 (QFAD…SSKR). Residues 7362-7374 (SESNSSITTTQPT) are compositionally biased toward polar residues. Low complexity-rich tracts occupy residues 7411–7441 (SSRGASPNRSTSVSSQAAQAASPQVPATTTP) and 7490–7504 (SRPGSRAGSKAGSRA). Serine 7432 is modified (phosphoserine). A phosphoserine mark is found at serine 7510, serine 7513, and serine 7525. Residues 7519-7535 (EIQSVCSDVETVPQTHR) are compositionally biased toward polar residues. The Microtubule tip localization signal signature appears at 7550–7553 (SKIP).

Homodimer. Isoform 1 interacts (via N-terminus) with PLEC (via N-terminus). Interacts with the neuronal intermediate filament protein, PRPH. Interacts with DES. Interacts with SYNE3. Isoform 1 and isoform 6 can homodimerize (via N-terminus). Isoform 1 interacts (via N-terminus) with ACTN2. Isoform 1 interacts (via N-terminus) with PLEC (via N-terminus). Isoform 3 interacts (via N-terminus) with COL17A1 (via cytoplasmic region). Isoform 3 interacts (via N-terminus) with ITGB4 isoform beta-4a (via cytoplasmic region). Isoform 3 interacts (via N-terminus) with ERBIN (via C-terminus). Isoform 3 associates (via C-terminal) with KRT5-KRT14 (via rod region) intermediate filaments of keratins. Interacts with MAPRE1; probably required for targeting to the growing microtubule plus ends. Interacts with TMIGD2. Isoform 9 interacts with TMEM108. As to expression, isoform 1 is expressed in myoblasts (at protein level). Isoform 3 is expressed in the skin. Isoform 6 is expressed in the brain. Highly expressed in skeletal muscle and cultured keratinocytes.

It localises to the cytoplasm. It is found in the cytoskeleton. Its subcellular location is the stress fiber. The protein resides in the cell projection. The protein localises to the axon. It localises to the myofibril. It is found in the sarcomere. Its subcellular location is the z line. The protein resides in the h zone. The protein localises to the cell junction. It localises to the hemidesmosome. It is found in the nucleus. Its subcellular location is the nucleus envelope. The protein resides in the membrane. The protein localises to the endoplasmic reticulum membrane. It localises to the cell cortex. It is found in the cell membrane. Cytoskeletal linker protein. Acts as an integrator of intermediate filaments, actin and microtubule cytoskeleton networks. Required for anchoring either intermediate filaments to the actin cytoskeleton in neural and muscle cells or keratin-containing intermediate filaments to hemidesmosomes in epithelial cells. The proteins may self-aggregate to form filaments or a two-dimensional mesh. Regulates the organization and stability of the microtubule network of sensory neurons to allow axonal transport. Mediates docking of the dynein/dynactin motor complex to vesicle cargos for retrograde axonal transport through its interaction with TMEM108 and DCTN1. Functionally, plays a structural role in the assembly of hemidesmosomes of epithelial cells; anchors keratin-containing intermediate filaments to the inner plaque of hemidesmosomes. Required for the regulation of keratinocyte polarity and motility; mediates integrin ITGB4 regulation of RAC1 activity. In terms of biological role, required for bundling actin filaments around the nucleus. Its function is as follows. Regulates the organization and stability of the microtubule network of sensory neurons to allow axonal transport. In Homo sapiens (Human), this protein is Dystonin.